A 345-amino-acid chain; its full sequence is Mariner Mos1 transposase (345 aa).

A DNA-binding region spans residues 1–112 (MSSFVPNKEQ…VSNRLREMGK (112 aa)). 2 DNA-binding regions (H-T-H motif) span residues 24–55 (TAAESHRMLVEAFGEQVPTVKKCERWFQRFKS) and 89–110 (QKQLAEQLEVSQQAVSNRLREM). The tract at residues 113-125 (IQKVGRWVPHELN) is linker. Residues 126–345 (ERQMERRKNT…CVASDGKYLE (220 aa)) are catalytic. Mg(2+) contacts are provided by aspartate 156, aspartate 249, and aspartate 284.

As to quaternary structure, homodimer. The complex has a trans arrangement, with each transposon end recognized by the DNA binding region of one transposase monomer and by the active site of the other monomer. It depends on Mg(2+) as a cofactor. Requires Mn(2+) as cofactor.

It is found in the nucleus. Its function is as follows. Mediates transposition of transposon Mos1 by a 'cut and paste' mechanism. Transposases are sequence-specific nucleases and strand transferases that catalyze transposition through an ordered series of events: sequence-specific binding of transposase to the terminal inverted repeats (IR) present at each end of the transposon, pairing of the transposon IRs in a paired-end complex (PEC), cleavage of one or both DNA strands at each transposon end, capture of target DNA, and strand transfer to insert the transposon at a new site. The sequence is that of Mariner Mos1 transposase (mariner\T) from Drosophila mauritiana (Fruit fly).